We begin with the raw amino-acid sequence, 874 residues long: Translation initiation factor IF-2 (874 aa).

The disordered stretch occupies residues 1–262 (MEDKNKTIKE…EKSTSDRDFS (262 aa)). Over residues 54 to 63 (SKPPVMPLPL) the composition is skewed to pro residues. Positions 83 to 104 (AKREESPGKQDAGRPPRDKDTR) are enriched in basic and acidic residues. A compositionally biased stretch (gly residues) spans 141–222 (SGGGYQGNRG…NRGPRSGGTG (82 aa)). The segment covering 235-244 (LSQSRGSSVT) has biased composition (polar residues). Residues 250-262 (HDKEKSTSDRDFS) are compositionally biased toward basic and acidic residues. The region spanning 369-538 (NRPPVVTIMG…LLQAEVMDLK (170 aa)) is the tr-type G domain. A G1 region spans residues 378-385 (GHVDHGKT). 378–385 (GHVDHGKT) lines the GTP pocket. A G2 region spans residues 403 to 407 (GITQH). A G3 region spans residues 424–427 (DTPG). GTP-binding positions include 424–428 (DTPGH) and 478–481 (NKID). The segment at 478-481 (NKID) is G4. A G5 region spans residues 514 to 516 (SAR).

Belongs to the TRAFAC class translation factor GTPase superfamily. Classic translation factor GTPase family. IF-2 subfamily.

It localises to the cytoplasm. Functionally, one of the essential components for the initiation of protein synthesis. Protects formylmethionyl-tRNA from spontaneous hydrolysis and promotes its binding to the 30S ribosomal subunits. Also involved in the hydrolysis of GTP during the formation of the 70S ribosomal complex. This chain is Translation initiation factor IF-2, found in Leptospira interrogans serogroup Icterohaemorrhagiae serovar copenhageni (strain Fiocruz L1-130).